A 321-amino-acid chain; its full sequence is S-methyl-5'-thioadenosine phosphorylase (321 aa).

Phosphate contacts are provided by residues T30, 73 to 74 (RH), and 106 to 107 (SA). Residue M215 coordinates substrate. S216 is a phosphate binding site. 239–241 (DYD) contacts substrate.

This sequence belongs to the PNP/MTAP phosphorylase family. MTAP subfamily. As to quaternary structure, homotrimer.

It localises to the cytoplasm. The protein resides in the nucleus. The enzyme catalyses S-methyl-5'-thioadenosine + phosphate = 5-(methylsulfanyl)-alpha-D-ribose 1-phosphate + adenine. It participates in amino-acid biosynthesis; L-methionine biosynthesis via salvage pathway; S-methyl-5-thio-alpha-D-ribose 1-phosphate from S-methyl-5'-thioadenosine (phosphorylase route): step 1/1. In terms of biological role, catalyzes the reversible phosphorylation of S-methyl-5'-thioadenosine (MTA) to adenine and 5-methylthioribose-1-phosphate. Involved in the breakdown of MTA, a major by-product of polyamine biosynthesis. Responsible for the first step in the methionine salvage pathway after MTA has been generated from S-adenosylmethionine. Has broad substrate specificity with 6-aminopurine nucleosides as preferred substrates. The sequence is that of S-methyl-5'-thioadenosine phosphorylase from Yarrowia lipolytica (strain CLIB 122 / E 150) (Yeast).